A 214-amino-acid chain; its full sequence is A-type ATP synthase subunit D (214 aa).

It belongs to the V-ATPase D subunit family. In terms of assembly, has multiple subunits with at least A(3), B(3), C, D, E, F, H, I and proteolipid K(x).

It localises to the cell membrane. Component of the A-type ATP synthase that produces ATP from ADP in the presence of a proton gradient across the membrane. This Pyrococcus furiosus (strain ATCC 43587 / DSM 3638 / JCM 8422 / Vc1) protein is A-type ATP synthase subunit D.